Here is a 570-residue protein sequence, read N- to C-terminus: Zinc finger protein 76 (570 aa).

A Glycyl lysine isopeptide (Lys-Gly) (interchain with G-Cter in SUMO2) cross-link involves residue K24. A run of 3 repeats spans residues 34–45 (IQLEDGTTAYIH), 62–73 (VQLEDGSMAYIH), and 88–99 (VQLEDGSTAYIH). The 3 X 12 AA approximate repeats stretch occupies residues 34–99 (IQLEDGTTAY…LEDGSTAYIH (66 aa)). 7 C2H2-type zinc fingers span residues 165 to 189 (FRCGYKGCGRLYTTAHHLKVHERAH), 195 to 219 (YRCDFPSCGKAFATGYGLKSHVRTH), 225 to 249 (YKCPEELCSKAFKTSGDLQKHVRTH), 255 to 279 (FQCPFEGCGRSFTTSNIRKVHVRTH), 285 to 309 (YTCPEPHCGRGFTSATNYKNHVRIH), 315 to 339 (YVCTVPGCGKRFTEYSSLYKHHVVH), and 345 to 368 (YTCSTCGKTYRQTSTLAMHKRSAH). The interval 365-401 (RSAHGELEATEESEQALYEQQQLEAASAAEESPPPKR) is disordered. Positions 379–395 (QALYEQQQLEAASAAEE) are enriched in low complexity.

This sequence belongs to the krueppel C2H2-type zinc-finger protein family. In terms of tissue distribution, testis.

Its subcellular location is the nucleus. May be involved in transcriptional regulation. The protein is Zinc finger protein 76 (ZNF76) of Homo sapiens (Human).